Consider the following 359-residue polypeptide: Src kinase-associated phosphoprotein 1 (359 aa).

The 104-residue stretch at 107–210 (NVIKQGYLEK…WVDQISFLLK (104 aa)) folds into the PH domain. Tyr142, Tyr219, and Tyr232 each carry phosphotyrosine. The segment covering 219-237 (YEEDEEEEEKEETYDDIDG) has biased composition (acidic residues). Residues 219–239 (YEEDEEEEEKEETYDDIDGFD) form a disordered region. 2 positions are modified to phosphotyrosine; by FYN: Tyr271 and Tyr295. The tract at residues 290–295 (RKGVDY) is interaction with FYB1. The region spanning 294–355 (DYASYYQGLW…PKEYLTTAFE (62 aa)) is the SH3 domain.

The protein belongs to the SKAP family. In terms of assembly, homodimer. Interacts with FYN. Interacts with PTPRC. Interacts with GRB2 when phosphorylated on Tyr-271. Interacts with FYB1, which is required for SKAP2 protein stability. Part of a complex consisting of SKAP1, FYB1 and CLNK. Interacts with RASGRP1. Interacts with FYB2. In terms of processing, phosphorylated on tyrosines. Phosphorylation by FYN on Tyr-271 is required for GRB2 interaction. Phosphorylation by FYN on Tyr-295 abolishes interaction with FYB1. Tyr-232 is dephosphorylated by PTPRC. As to expression, highly expressed in thymocytes and peripheral blood lymphocytes. Also expressed in spleen cells and testis. Present in T-cells (at protein level).

The protein localises to the cytoplasm. The protein resides in the nucleus. It is found in the cell membrane. Its function is as follows. Positively regulates T-cell receptor signaling by enhancing the MAP kinase pathway. Required for optimal conjugation between T-cells and antigen-presenting cells by promoting the clustering of integrin ITGAL on the surface of T-cells. May be involved in high affinity immunoglobulin epsilon receptor signaling in mast cells. The chain is Src kinase-associated phosphoprotein 1 (SKAP1) from Homo sapiens (Human).